A 23-amino-acid polypeptide reads, in one-letter code: QKLCERPSGTWSGVCGNNNACKN.

Gln-1 is subject to Pyrrolidone carboxylic acid.

This sequence belongs to the DEFL family. As to quaternary structure, forms oligomers in its native state.

Its function is as follows. Possesses antifungal activity sensitive to inorganic cations. The chain is Defensin-like protein 2 from Brassica napus (Rape).